A 1382-amino-acid chain; its full sequence is Histone-lysine N-methyltransferase SUVR5 (1382 aa).

2 disordered regions span residues 43–62 (TVTG…SEPK) and 354–373 (GNTN…NTPE). 3 consecutive C2H2-type zinc fingers follow at residues 735–758 (FACA…EERH), 769–792 (LQCI…QAVH), and 838–861 (FVCK…QAEH). Residues 915–935 (RRMQGSKSLGTEGNTEAGVSP) are disordered. Residues 919 to 928 (GSKSLGTEGN) are compositionally biased toward polar residues. One can recognise a Pre-SET domain in the interval 1145–1221 (LRCSCRSSVC…TCQNRVLQNG (77 aa)). The Zn(2+) site is built by Cys-1147, Cys-1149, Cys-1154, Cys-1159, Cys-1182, Cys-1203, Cys-1207, Cys-1209, and Cys-1213. The region spanning 1224–1356 (AKLEVFRTES…AGEEITRDYG (133 aa)) is the SET domain. Residues 1234 to 1236 (KGW), Tyr-1277, and 1313 to 1314 (NH) each bind S-adenosyl-L-methionine. Cys-1316 is a Zn(2+) binding site. Tyr-1355 is an S-adenosyl-L-methionine binding site. The 17-residue stretch at 1366–1382 (NEHPCHCKATNCRGLLS) folds into the Post-SET domain. Cys-1370, Cys-1372, and Cys-1377 together coordinate Zn(2+).

It belongs to the class V-like SAM-binding methyltransferase superfamily. Component of a regulatory complex with LDL1/SWP1. Interacts with LDL1/SWP1.

Its subcellular location is the nucleus. The protein localises to the chromosome. The catalysed reaction is L-lysyl-[histone] + S-adenosyl-L-methionine = N(6)-methyl-L-lysyl-[histone] + S-adenosyl-L-homocysteine + H(+). Histone methyltransferase that functions together with its binding partner LDL1/SWP1 as one of the regulators of flower timing in Arabidopsis. Mediates H3K9me2 deposition and regulates gene expression in a DNA methylation-independent manner. Binds DNA through its zinc fingers and represses the expression of a subset of stimulus response genes. May represent a novel mechanism for plants to regulate their chromatin and transcriptional state, which may allow for the adaptability and modulation necessary to rapidly respond to environment or developmental cues. The sequence is that of Histone-lysine N-methyltransferase SUVR5 from Arabidopsis thaliana (Mouse-ear cress).